The chain runs to 169 residues: Neurotensin/neuromedin N (169 aa).

A signal peptide spans 1-22 (MRGMNLQLVCLTLLAFSSWSLC).

The protein belongs to the neurotensin family. In terms of assembly, interacts with NTSR1. Interacts with SORT1. Interacts with SORL1. Neurotensin is cleaved and degraded by Angiotensin-converting enzyme (ACE) and neprilysin (MME).

Its subcellular location is the secreted. The protein resides in the cytoplasmic vesicle. It localises to the secretory vesicle. Functionally, neurotensin may play an endocrine or paracrine role in the regulation of fat metabolism. It causes contraction of smooth muscle. In Mus musculus (Mouse), this protein is Neurotensin/neuromedin N (Nts).